The sequence spans 117 residues: Antitoxin RelB3 (117 aa).

Its function is as follows. Antitoxin component of a type II toxin-antitoxin (TA) system. Neutralizes the effect of cognate toxin RelE3, but no other RelE or ParE toxin. In Caulobacter vibrioides (strain ATCC 19089 / CIP 103742 / CB 15) (Caulobacter crescentus), this protein is Antitoxin RelB3 (relB3).